Reading from the N-terminus, the 846-residue chain is MAP7 domain-containing protein 1 (846 aa).

Disordered regions lie at residues 1 to 153 (MESG…ERAK) and 186 to 210 (EQRLKAEQRRAALEERQRQKLEKNK). The span at 24–41 (EPRPSPEGDPSPPPPPTP) shows a compositional bias: pro residues. Residues T49 and T53 each carry the phosphothreonine modification. Phosphoserine is present on S95. T99 carries the phosphothreonine modification. The segment covering 113–123 (RSSQPSPTTVP) has biased composition (low complexity). Phosphoserine is present on residues S115 and S118. A Phosphothreonine modification is found at T120. Phosphoserine occurs at positions 125 and 127. The stretch at 130-224 (AKQDVKKAGE…AAIQRSVKKT (95 aa)) forms a coiled coil. The span at 132 to 153 (QDVKKAGERHKLAKERREERAK) shows a compositional bias: basic and acidic residues. S256, S275, S315, S368, and S401 each carry phosphoserine. Residues 318–816 (TLPRNGRDQG…KGTAGDKSLG (499 aa)) are disordered. A compositionally biased stretch (basic and acidic residues) spans 407–437 (RRLEATPVQKKEKKDKERENEKEKSALARER). Residues 414–443 (VQKKEKKDKERENEKEKSALARERNLKKRQ) adopt a coiled-coil conformation. Phosphoserine occurs at positions 444, 448, 454, and 460. Low complexity predominate over residues 460-471 (SPKSKARPSSPS). K462 is covalently cross-linked (Glycyl lysine isopeptide (Lys-Gly) (interchain with G-Cter in SUMO2)). 2 positions are modified to phosphoserine: S479 and S496. Residues 479–497 (SPCPSPGPGHALPPKPPSP) are compositionally biased toward pro residues. Basic and acidic residues predominate over residues 523-539 (PEDKNHRKSRAAEEKEP). Residues 542 to 556 (PASPAPSPVPSPTPA) are compositionally biased toward pro residues. Phosphoserine occurs at positions 544, 548, and 552. Phosphothreonine is present on T554. Low complexity predominate over residues 568–579 (PAETAVPAVPAA). Residues 599 to 740 (TTDREEATRL…AETKKQDAKE (142 aa)) are a coiled coil. Over residues 600–740 (TDREEATRLL…AETKKQDAKE (141 aa)) the composition is skewed to basic and acidic residues. Position 818 is a phosphothreonine (T818).

The protein belongs to the MAP7 family.

It localises to the cytoplasm. Its subcellular location is the cytoskeleton. The protein localises to the spindle. The protein resides in the microtubule organizing center. It is found in the centrosome. It localises to the midbody. Its function is as follows. Microtubule-stabilizing protein involved in the control of cell motility and neurite outgrowth. Facilitate microtubule stabilization through the maintenance of acetylated stable microtubules. In Mus musculus (Mouse), this protein is MAP7 domain-containing protein 1 (Map7d1).